We begin with the raw amino-acid sequence, 62 residues long: Photosystem II reaction center protein Z (62 aa).

2 helical membrane passes run 8–28 and 41–61; these read AVFA…AVFA and FSGA…NSSV.

It belongs to the PsbZ family. PSII is composed of 1 copy each of membrane proteins PsbA, PsbB, PsbC, PsbD, PsbE, PsbF, PsbH, PsbI, PsbJ, PsbK, PsbL, PsbM, PsbT, PsbY, PsbZ, Psb30/Ycf12, at least 3 peripheral proteins of the oxygen-evolving complex and a large number of cofactors. It forms dimeric complexes.

The protein resides in the plastid. Its subcellular location is the chloroplast thylakoid membrane. Functionally, may control the interaction of photosystem II (PSII) cores with the light-harvesting antenna, regulates electron flow through the 2 photosystem reaction centers. PSII is a light-driven water plastoquinone oxidoreductase, using light energy to abstract electrons from H(2)O, generating a proton gradient subsequently used for ATP formation. This chain is Photosystem II reaction center protein Z, found in Selaginella uncinata (Blue spike-moss).